A 540-amino-acid chain; its full sequence is Chaperonin GroEL 2/3 (540 aa).

ATP-binding positions include 30–33, Lys-51, 87–91, Gly-415, 479–481, and Asp-495; these read TLGP, DGTTT, and NAA.

This sequence belongs to the chaperonin (HSP60) family. Forms a cylinder of 14 subunits composed of two heptameric rings stacked back-to-back. Interacts with the co-chaperonin GroES.

Its subcellular location is the cytoplasm. The enzyme catalyses ATP + H2O + a folded polypeptide = ADP + phosphate + an unfolded polypeptide.. Its function is as follows. Together with its co-chaperonin GroES, plays an essential role in assisting protein folding. The GroEL-GroES system forms a nano-cage that allows encapsulation of the non-native substrate proteins and provides a physical environment optimized to promote and accelerate protein folding. In Paraburkholderia xenovorans (strain LB400), this protein is Chaperonin GroEL 2/3.